The following is a 339-amino-acid chain: Anthranilate phosphoribosyltransferase (339 aa).

5-phospho-alpha-D-ribose 1-diphosphate-binding positions include Gly-81, 84–85 (GD), Thr-89, 91–94 (NIST), 109–117 (KHGNRNLSS), and Thr-121. Residue Gly-81 coordinates anthranilate. Position 93 (Ser-93) interacts with Mg(2+). Position 112 (Asn-112) interacts with anthranilate. Residue Arg-167 coordinates anthranilate. Positions 226 and 227 each coordinate Mg(2+).

Belongs to the anthranilate phosphoribosyltransferase family. Homodimer. It depends on Mg(2+) as a cofactor.

It catalyses the reaction N-(5-phospho-beta-D-ribosyl)anthranilate + diphosphate = 5-phospho-alpha-D-ribose 1-diphosphate + anthranilate. The protein operates within amino-acid biosynthesis; L-tryptophan biosynthesis; L-tryptophan from chorismate: step 2/5. Its function is as follows. Catalyzes the transfer of the phosphoribosyl group of 5-phosphorylribose-1-pyrophosphate (PRPP) to anthranilate to yield N-(5'-phosphoribosyl)-anthranilate (PRA). This chain is Anthranilate phosphoribosyltransferase, found in Ruegeria pomeroyi (strain ATCC 700808 / DSM 15171 / DSS-3) (Silicibacter pomeroyi).